A 444-amino-acid chain; its full sequence is UDP-N-acetylmuramate--L-alanine ligase (444 aa).

110–116 (GAHGKTS) contributes to the ATP binding site.

This sequence belongs to the MurCDEF family.

It is found in the cytoplasm. The enzyme catalyses UDP-N-acetyl-alpha-D-muramate + L-alanine + ATP = UDP-N-acetyl-alpha-D-muramoyl-L-alanine + ADP + phosphate + H(+). The protein operates within cell wall biogenesis; peptidoglycan biosynthesis. In terms of biological role, cell wall formation. The protein is UDP-N-acetylmuramate--L-alanine ligase of Streptococcus pneumoniae (strain P1031).